The primary structure comprises 224 residues: Peroxiredoxin-like 2A (224 aa).

Residues 14 to 112 (MWSVGLGAVG…SKLGVPLYAV (99 aa)) are thioredoxin fold. U85 is a non-standard amino acid (selenocysteine). C88 serves as the catalytic Redox-active.

This sequence belongs to the peroxiredoxin-like PRXL2 family. PRXL2A subfamily.

It is found in the cytoplasm. Involved in redox regulation of the cell. Acts as an antioxidant. Inhibits TNFSF11-induced NFKB1 and JUN activation and osteoclast differentiation. May affect bone resorption and help to maintain bone mass. This Gallus gallus (Chicken) protein is Peroxiredoxin-like 2A (PRXL2A).